A 243-amino-acid polypeptide reads, in one-letter code: Uridylate kinase (243 aa).

12 to 15 (KLSG) provides a ligand contact to ATP. Glycine 54 contributes to the UMP binding site. Residues glycine 55 and arginine 59 each coordinate ATP. A UMP-binding site is contributed by 135-142 (TGNPYFTT). ATP-binding residues include asparagine 163, tyrosine 169, and aspartate 172.

The protein belongs to the UMP kinase family. In terms of assembly, homohexamer.

The protein resides in the cytoplasm. The catalysed reaction is UMP + ATP = UDP + ADP. The protein operates within pyrimidine metabolism; CTP biosynthesis via de novo pathway; UDP from UMP (UMPK route): step 1/1. With respect to regulation, inhibited by UTP. Functionally, catalyzes the reversible phosphorylation of UMP to UDP. This is Uridylate kinase from Roseiflexus sp. (strain RS-1).